Reading from the N-terminus, the 141-residue chain is MSSEPGRVMALDVGERRIGVALSDPTRMLASPLTTIRAVPRSTALKRILTLIRDYQVTALVVGLPLTMNGDIGPQATLVQQFVDELRPLIDIPIFFVDERLTTVAAERMMIDLKIKPEQRRARIDEVAASIILQDFLDSQR.

The protein belongs to the YqgF nuclease family.

It is found in the cytoplasm. Could be a nuclease involved in processing of the 5'-end of pre-16S rRNA. The protein is Putative pre-16S rRNA nuclease of Roseiflexus sp. (strain RS-1).